Here is a 457-residue protein sequence, read N- to C-terminus: uncharacterized protein (457 aa).

A TRAM domain is found at 6-64 (PVHKGEVLDVTIMDLTYQGMGVAKVDNYPIFIENALPEEKITVKVTKTTKNFAFGDVEK). 4 residues coordinate S-adenosyl-L-methionine: Gln287, Tyr316, Glu337, and Asp385. The active-site Nucleophile is the Cys412.

It belongs to the class I-like SAM-binding methyltransferase superfamily. RNA M5U methyltransferase family.

This is an uncharacterized protein from Lactiplantibacillus plantarum (strain ATCC BAA-793 / NCIMB 8826 / WCFS1) (Lactobacillus plantarum).